Consider the following 311-residue polypeptide: Mediator of RNA polymerase II transcription subunit 27 (311 aa).

Ser-132 bears the Phosphoserine mark. An N6-methyllysine modification is found at Lys-134.

It belongs to the Mediator complex subunit 27 family. As to quaternary structure, component of the Mediator complex, which is composed of MED1, MED4, MED6, MED7, MED8, MED9, MED10, MED11, MED12, MED13, MED13L, MED14, MED15, MED16, MED17, MED18, MED19, MED20, MED21, MED22, MED23, MED24, MED25, MED26, MED27, MED29, MED30, MED31, CCNC, CDK8 and CDC2L6/CDK11. The MED12, MED13, CCNC and CDK8 subunits form a distinct module termed the CDK8 module. Mediator containing the CDK8 module is less active than Mediator lacking this module in supporting transcriptional activation. Individual preparations of the Mediator complex lacking one or more distinct subunits have been variously termed ARC, CRSP, DRIP, PC2, SMCC and TRAP.

The protein resides in the nucleus. Its function is as follows. Component of the Mediator complex, a coactivator involved in the regulated transcription of nearly all RNA polymerase II-dependent genes. Mediator functions as a bridge to convey information from gene-specific regulatory proteins to the basal RNA polymerase II transcription machinery. Mediator is recruited to promoters by direct interactions with regulatory proteins and serves as a scaffold for the assembly of a functional preinitiation complex with RNA polymerase II and the general transcription factors. In Sus scrofa (Pig), this protein is Mediator of RNA polymerase II transcription subunit 27 (MED27).